A 585-amino-acid chain; its full sequence is Bestrophin-1 (585 aa).

Over methionine 1–leucine 31 the chain is Cytoplasmic. Alanine 10 contributes to the Ca(2+) binding site. A helical transmembrane segment spans residues leucine 32–arginine 51. Residues leucine 52–leucine 60 are Extracellular-facing. Residues methionine 61 to leucine 82 traverse the membrane as a helical segment. Residues glycine 83–threonine 237 are Cytoplasmic-facing. Residues glutamine 238–arginine 255 form a helical membrane-spanning segment. Residues glutamine 256–proline 274 are Extracellular-facing. The chain crosses the membrane as a helical span at residues valine 275 to leucine 288. At lysine 289–serine 585 the chain is on the cytoplasmic side. Ca(2+) is bound by residues glutamine 293, asparagine 296, aspartate 301, and aspartate 304. An auto-inhibitory segment region spans residues proline 346–glutamine 379.

It belongs to the anion channel-forming bestrophin (TC 1.A.46) family. Calcium-sensitive chloride channel subfamily. In terms of assembly, interacts with YWHAG; this interaction promotes the ligand-gated L-glutamate channel activity leading to the positive regulation of NMDA glutamate receptor activity through the L-glutamate secretion.

It is found in the cell membrane. The protein resides in the basolateral cell membrane. The enzyme catalyses chloride(in) = chloride(out). It catalyses the reaction hydrogencarbonate(in) = hydrogencarbonate(out). It carries out the reaction 4-aminobutanoate(in) = 4-aminobutanoate(out). The catalysed reaction is L-glutamate(out) = L-glutamate(in). Functionally, ligand-gated anion channel that allows the movement of anions across cell membranes when activated by calcium (Ca2+). Allows the movement of chloride and hydrogencarbonate. Found in a partially open conformation leading to significantly smaller chloride movement. Upon F2R/PAR-1 activation, the sequestered calcium is released into the cytosol of astrocytes, leading to the (Ca2+)-dependent release of L-glutamate into the synaptic cleft that targets the neuronal postsynaptic GRIN2A/NMDAR receptor resulting in the synaptic plasticity regulation. Upon activation of the norepinephrine-alpha-1 adrenergic receptor signaling pathway, transports as well D-serine than L-glutamate in a (Ca2+)-dependent manner, leading to activation of adjacent NMDAR receptors and therefore regulates the heterosynaptic long-term depression and metaplasticity during initial memory acquisition. Releases the 4-aminobutanoate neurotransmitter in a (Ca2+)-dependent manner, and participates in its tonic release from cerebellar glial cells. The sequence is that of Bestrophin-1 (BEST1) from Macaca fascicularis (Crab-eating macaque).